Reading from the N-terminus, the 789-residue chain is Ent-kaurene synthase TSP4, chloroplastic (789 aa).

Mg(2+)-binding residues include aspartate 540 and aspartate 544. Positions 540–544 (DDFFD) match the DDXXD motif motif. The helical transmembrane segment at 638 to 656 (AYVSFALGPIVLPALYLVG) threads the bilayer. Residues asparagine 684, arginine 687, and glutamate 692 each contribute to the Mg(2+) site.

It belongs to the terpene synthase family. Mg(2+) is required as a cofactor. As to expression, expressed in leaves and fruits, including trichomes.

The protein resides in the plastid. It is found in the chloroplast membrane. The catalysed reaction is ent-copalyl diphosphate = ent-kaur-16-ene + diphosphate. Its pathway is plant hormone biosynthesis; gibberellin biosynthesis. Functionally, involved in the biosynthesis of labdane-type diterpenoid including cleroda-dienols, and peregrinol lactones and furan derivatives, dopaminergic diterpenoids that can bind to dopamine receptors in the human pituitary gland, have probably ability to lower prolactin levels, and are used to treat menstrual cycle disorders (e.g. premenstrual syndrome and mastodynia). Terpene synthase that produces ent-kaurene from ent-copalyl diphosphate. In Vitex agnus-castus (Chaste tree), this protein is Ent-kaurene synthase TSP4, chloroplastic.